The primary structure comprises 535 residues: Dimethylaniline monooxygenase [N-oxide-forming] 2 (535 aa).

FAD is bound by residues 9 to 13, E32, 40 to 41, and 61 to 62; these read GAGVS, LW, and NT. NADP(+) is bound by residues 60–61 and 195–198; these read TN and SAAD. Residue K492 forms a Glycyl lysine isopeptide (Lys-Gly) (interchain with G-Cter in SUMO) linkage. Residues 510–530 form a helical membrane-spanning segment; the sequence is APVSFLIKVLGLLAIVLAFFF.

Belongs to the FMO family. The cofactor is FAD. Mg(2+) serves as cofactor.

It is found in the microsome membrane. The protein resides in the endoplasmic reticulum membrane. Its function is as follows. Catalyzes the oxidative metabolism of numerous xenobiotics, including mainly therapeutic drugs and insecticides that contain a soft nucleophile, most commonly nitrogen and sulfur and participates to their bioactivation. The chain is Dimethylaniline monooxygenase [N-oxide-forming] 2 from Rattus norvegicus (Rat).